A 319-amino-acid chain; its full sequence is Methionyl-tRNA formyltransferase (319 aa).

Residue 113-116 (SLLP) coordinates (6S)-5,6,7,8-tetrahydrofolate.

It belongs to the Fmt family.

It carries out the reaction L-methionyl-tRNA(fMet) + (6R)-10-formyltetrahydrofolate = N-formyl-L-methionyl-tRNA(fMet) + (6S)-5,6,7,8-tetrahydrofolate + H(+). Its function is as follows. Attaches a formyl group to the free amino group of methionyl-tRNA(fMet). The formyl group appears to play a dual role in the initiator identity of N-formylmethionyl-tRNA by promoting its recognition by IF2 and preventing the misappropriation of this tRNA by the elongation apparatus. This chain is Methionyl-tRNA formyltransferase, found in Hamiltonella defensa subsp. Acyrthosiphon pisum (strain 5AT).